Here is a 250-residue protein sequence, read N- to C-terminus: Ubiquinone/menaquinone biosynthesis C-methyltransferase UbiE (250 aa).

S-adenosyl-L-methionine is bound by residues S73, D94, and N122 to A123.

It belongs to the class I-like SAM-binding methyltransferase superfamily. MenG/UbiE family.

The catalysed reaction is a 2-demethylmenaquinol + S-adenosyl-L-methionine = a menaquinol + S-adenosyl-L-homocysteine + H(+). It catalyses the reaction a 2-methoxy-6-(all-trans-polyprenyl)benzene-1,4-diol + S-adenosyl-L-methionine = a 5-methoxy-2-methyl-3-(all-trans-polyprenyl)benzene-1,4-diol + S-adenosyl-L-homocysteine + H(+). It participates in quinol/quinone metabolism; menaquinone biosynthesis; menaquinol from 1,4-dihydroxy-2-naphthoate: step 2/2. It functions in the pathway cofactor biosynthesis; ubiquinone biosynthesis. In terms of biological role, methyltransferase required for the conversion of demethylmenaquinol (DMKH2) to menaquinol (MKH2) and the conversion of 2-polyprenyl-6-methoxy-1,4-benzoquinol (DDMQH2) to 2-polyprenyl-3-methyl-6-methoxy-1,4-benzoquinol (DMQH2). This chain is Ubiquinone/menaquinone biosynthesis C-methyltransferase UbiE, found in Legionella pneumophila (strain Lens).